Here is a 312-residue protein sequence, read N- to C-terminus: Aminoacyl tRNA synthase complex-interacting multifunctional protein 1 (312 aa).

Residue Met-1 is modified to N-acetylmethionine. Ala-2 is subject to N-acetylalanine. The segment at 6–46 (AVLKRLEQKGAEADQIIEYLKQQVSLLKEKAILQATLREEK) is required for fibroblast proliferation. The interval 54-194 (KLKKEIEELK…APRTVVSGLV (141 aa)) is interaction with HSP90B1. The segment at 101 to 114 (AVTTVSSGTKEQIK) is required for endothelial cell death. The segment at 107-147 (SGTKEQIKGGTGDEKKAKEKIEKKGEKKEKKQQSIAGSADS) is disordered. The span at 111–138 (EQIKGGTGDEKKAKEKIEKKGEKKEKKQ) shows a compositional bias: basic and acidic residues. Residues 114–192 (KGGTGDEKKA…EIAPRTVVSG (79 aa)) form a required for endothelial cell migration region. Lys-137 participates in a covalent cross-link: Glycyl lysine isopeptide (Lys-Gly) (interchain with G-Cter in SUMO1). Residue Ser-140 is modified to Phosphoserine. A tRNA-binding domain is found at 151–252 (DVSRLDLRIG…NGSVPGDRIT (102 aa)). Lys-269 is modified (N6-succinyllysine).

In terms of assembly, homodimer. Part of the multisynthetase complex (MSC), a multisubunit complex that groups tRNA ligases for Arg (RARS1), Asp (DARS1), Gln (QARS1), Ile (IARS1), Leu (LARS1), Lys (KARS1), Met (MARS1) the bifunctional ligase for Glu and Pro (EPRS1) and the auxiliary subunits AIMP1/p43, AIMP2/p38 and EEF1E1/p18. Interacts (via N-terminus) with RARS1 (via N-terminus). Part of a complex composed of RARS1, QARS1 and AIMP1. Interacts (via C-terminus) with SMURF2. Interacts (via N-terminus) with HSP90B1/gp96 (via C-terminus). Interacts with PSMA7. Interacts with TARS3. Post-translationally, cleaved by caspase-7 in response to apoptosis to produce EMAP-II.

Its subcellular location is the nucleus. It localises to the cytoplasm. The protein resides in the cytosol. It is found in the secreted. The protein localises to the endoplasmic reticulum. Its subcellular location is the golgi apparatus. In terms of biological role, non-catalytic component of the multisynthase complex. Stimulates the catalytic activity of cytoplasmic arginyl-tRNA synthase. Binds tRNA. Possesses inflammatory cytokine activity. Negatively regulates TGF-beta signaling through stabilization of SMURF2 by binding to SMURF2 and inhibiting its SMAD7-mediated degradation. Involved in glucose homeostasis through induction of glucagon secretion at low glucose levels. Promotes dermal fibroblast proliferation and wound repair. Regulates KDELR1-mediated retention of HSP90B1/gp96 in the endoplasmic reticulum. Plays a role in angiogenesis by inducing endothelial cell migration at low concentrations and endothelian cell apoptosis at high concentrations. Induces maturation of dendritic cells and monocyte cell adhesion. Modulates endothelial cell responses by degrading HIF-1A through interaction with PSMA7. This chain is Aminoacyl tRNA synthase complex-interacting multifunctional protein 1 (AIMP1), found in Homo sapiens (Human).